The primary structure comprises 224 residues: Deoxyribose-phosphate aldolase (224 aa).

Residue Asp94 is the Proton donor/acceptor of the active site. The active-site Schiff-base intermediate with acetaldehyde is Lys156. Lys184 acts as the Proton donor/acceptor in catalysis.

It belongs to the DeoC/FbaB aldolase family. DeoC type 1 subfamily.

Its subcellular location is the cytoplasm. It carries out the reaction 2-deoxy-D-ribose 5-phosphate = D-glyceraldehyde 3-phosphate + acetaldehyde. It functions in the pathway carbohydrate degradation; 2-deoxy-D-ribose 1-phosphate degradation; D-glyceraldehyde 3-phosphate and acetaldehyde from 2-deoxy-alpha-D-ribose 1-phosphate: step 2/2. Functionally, catalyzes a reversible aldol reaction between acetaldehyde and D-glyceraldehyde 3-phosphate to generate 2-deoxy-D-ribose 5-phosphate. The chain is Deoxyribose-phosphate aldolase from Methanocella arvoryzae (strain DSM 22066 / NBRC 105507 / MRE50).